The sequence spans 328 residues: Cell division protein ZipA (328 aa).

Topologically, residues 1-4 are periplasmic; the sequence is MDLN. The chain crosses the membrane as a helical span at residues 5–25; the sequence is TILIIVGIVALVALIVHGLWS. Residues 26–328 lie on the Cytoplasmic side of the membrane; the sequence is NRREKSKYFD…NAEQAYLARV (303 aa). Residues 44–82 are disordered; the sequence is SLTSRSHTQEEMVQPNNISPNTYVENGHTPISQPTTEKL. Over residues 57–81 the composition is skewed to polar residues; sequence QPNNISPNTYVENGHTPISQPTTEK.

Belongs to the ZipA family. Interacts with FtsZ via their C-terminal domains.

It is found in the cell inner membrane. In terms of biological role, essential cell division protein that stabilizes the FtsZ protofilaments by cross-linking them and that serves as a cytoplasmic membrane anchor for the Z ring. Also required for the recruitment to the septal ring of downstream cell division proteins. In Haemophilus influenzae (strain PittGG), this protein is Cell division protein ZipA.